The primary structure comprises 932 residues: Isoleucine--tRNA ligase (932 aa).

The 'HIGH' region motif lies at 59-69 (PYANGTIHIGH). Glu562 contacts L-isoleucyl-5'-AMP. Positions 603–607 (KMSKS) match the 'KMSKS' region motif. ATP is bound at residue Lys606. 4 residues coordinate Zn(2+): Cys899, Cys902, Cys915, and Cys918.

The protein belongs to the class-I aminoacyl-tRNA synthetase family. IleS type 1 subfamily. In terms of assembly, monomer. Zn(2+) is required as a cofactor.

The protein localises to the cytoplasm. The enzyme catalyses tRNA(Ile) + L-isoleucine + ATP = L-isoleucyl-tRNA(Ile) + AMP + diphosphate. In terms of biological role, catalyzes the attachment of isoleucine to tRNA(Ile). As IleRS can inadvertently accommodate and process structurally similar amino acids such as valine, to avoid such errors it has two additional distinct tRNA(Ile)-dependent editing activities. One activity is designated as 'pretransfer' editing and involves the hydrolysis of activated Val-AMP. The other activity is designated 'posttransfer' editing and involves deacylation of mischarged Val-tRNA(Ile). The polypeptide is Isoleucine--tRNA ligase (Pasteurella multocida (strain Pm70)).